Here is a 215-residue protein sequence, read N- to C-terminus: Ribose-5-phosphate isomerase A (215 aa).

Substrate is bound by residues T26 to T29, D79 to D82, and K92 to G95. Catalysis depends on E101, which acts as the Proton acceptor. A substrate-binding site is contributed by K119.

The protein belongs to the ribose 5-phosphate isomerase family. In terms of assembly, homodimer.

The enzyme catalyses aldehydo-D-ribose 5-phosphate = D-ribulose 5-phosphate. The protein operates within carbohydrate degradation; pentose phosphate pathway; D-ribose 5-phosphate from D-ribulose 5-phosphate (non-oxidative stage): step 1/1. Catalyzes the reversible conversion of ribose-5-phosphate to ribulose 5-phosphate. This chain is Ribose-5-phosphate isomerase A, found in Xanthomonas oryzae pv. oryzae (strain MAFF 311018).